We begin with the raw amino-acid sequence, 262 residues long: MQVDLLSSAQSAHTLHLFHQHSPLVHCMTNDVVQTFTANTLLALGASPAMVIETEEASQFAAIASALLINVGTLTQPRAQAMRAAVEQAKSSQTPWTLDPVAVGALDYRRHFCHELLSFKPAAIRGNASEIMALAGVANGGRGVDTTDAAVNAIPAAQTLARETGAIVVVTGEVDYVTDGHRAVGIHGGDPLMTKVVGTGCALSAVVAACCALPGDMLENVASACHWMKQAGERAVARSEGPGSFVPHFLDALWQLTQEVQA.

Substrate is bound at residue Met-50. Residues Arg-125 and Thr-171 each coordinate ATP. Substrate is bound at residue Gly-198.

This sequence belongs to the Thz kinase family. It depends on Mg(2+) as a cofactor.

The enzyme catalyses 5-(2-hydroxyethyl)-4-methylthiazole + ATP = 4-methyl-5-(2-phosphooxyethyl)-thiazole + ADP + H(+). Its pathway is cofactor biosynthesis; thiamine diphosphate biosynthesis; 4-methyl-5-(2-phosphoethyl)-thiazole from 5-(2-hydroxyethyl)-4-methylthiazole: step 1/1. In terms of biological role, catalyzes the phosphorylation of the hydroxyl group of 4-methyl-5-beta-hydroxyethylthiazole (THZ). In Escherichia coli O157:H7, this protein is Hydroxyethylthiazole kinase.